A 275-amino-acid polypeptide reads, in one-letter code: Phosphate import ATP-binding protein PstB (275 aa).

The region spanning 29 to 270 is the ABC transporter domain; it reads LEIKDLDLYY…PNKKKTEDYI (242 aa). An ATP-binding site is contributed by 61 to 68; the sequence is GPSGCGKS.

This sequence belongs to the ABC transporter superfamily. Phosphate importer (TC 3.A.1.7) family. As to quaternary structure, the complex is composed of two ATP-binding proteins (PstB), two transmembrane proteins (PstC and PstA) and a solute-binding protein (PstS).

The protein resides in the cell inner membrane. The enzyme catalyses phosphate(out) + ATP + H2O = ADP + 2 phosphate(in) + H(+). Part of the ABC transporter complex PstSACB involved in phosphate import. Responsible for energy coupling to the transport system. In Pseudoalteromonas translucida (strain TAC 125), this protein is Phosphate import ATP-binding protein PstB.